Here is a 560-residue protein sequence, read N- to C-terminus: Dihydroxy-acid dehydratase (560 aa).

A [2Fe-2S] cluster-binding site is contributed by Cys-52. Asp-84 contacts Mg(2+). Residue Cys-125 coordinates [2Fe-2S] cluster. Mg(2+) contacts are provided by Asp-126 and Lys-127. Position 127 is an N6-carboxylysine (Lys-127). Cys-197 contributes to the [2Fe-2S] cluster binding site. Glu-448 serves as a coordination point for Mg(2+). Residue Ser-474 is the Proton acceptor of the active site.

This sequence belongs to the IlvD/Edd family. As to quaternary structure, homodimer. [2Fe-2S] cluster is required as a cofactor. The cofactor is Mg(2+).

It carries out the reaction (2R)-2,3-dihydroxy-3-methylbutanoate = 3-methyl-2-oxobutanoate + H2O. The catalysed reaction is (2R,3R)-2,3-dihydroxy-3-methylpentanoate = (S)-3-methyl-2-oxopentanoate + H2O. The protein operates within amino-acid biosynthesis; L-isoleucine biosynthesis; L-isoleucine from 2-oxobutanoate: step 3/4. Its pathway is amino-acid biosynthesis; L-valine biosynthesis; L-valine from pyruvate: step 3/4. Its function is as follows. Functions in the biosynthesis of branched-chain amino acids. Catalyzes the dehydration of (2R,3R)-2,3-dihydroxy-3-methylpentanoate (2,3-dihydroxy-3-methylvalerate) into 2-oxo-3-methylpentanoate (2-oxo-3-methylvalerate) and of (2R)-2,3-dihydroxy-3-methylbutanoate (2,3-dihydroxyisovalerate) into 2-oxo-3-methylbutanoate (2-oxoisovalerate), the penultimate precursor to L-isoleucine and L-valine, respectively. The polypeptide is Dihydroxy-acid dehydratase (Leptospira borgpetersenii serovar Hardjo-bovis (strain JB197)).